The chain runs to 119 residues: Large ribosomal subunit protein uL22c (119 aa).

This sequence belongs to the universal ribosomal protein uL22 family. In terms of assembly, part of the 50S ribosomal subunit.

It is found in the plastid. The protein localises to the chloroplast. In terms of biological role, this protein binds specifically to 23S rRNA. Functionally, the globular domain of the protein is located near the polypeptide exit tunnel on the outside of the subunit, while an extended beta-hairpin is found that lines the wall of the exit tunnel in the center of the 70S ribosome. The protein is Large ribosomal subunit protein uL22c (rpl22) of Angiopteris evecta (Mule's foot fern).